Reading from the N-terminus, the 568-residue chain is U6 small nuclear RNA (adenine-(43)-N(6))-methyltransferase (568 aa).

Residues 1 to 20 (MSEIDTNDIKKEMDNKNYRD) are disordered. Basic and acidic residues predominate over residues 7-20 (NDIKKEMDNKNYRD). The S-adenosyl-L-methionine site is built by R117, G151, D175, and N250. 3 disordered regions span residues 363–383 (KENNNINNNNNNNNNNNINNN), 403–431 (NLDSDDNNNNNNNNNNNNNNNNNNNNNNN), and 503–538 (DPKINNNNNNNNNNNNNNNNNNNNNNNNNNNNNKNN). Low complexity-rich tracts occupy residues 365-383 (NNNINNNNNNNNNNNINNN), 409-431 (NNNNNNNNNNNNNNNNNNNNNNN), and 507-538 (NNNNNNNNNNNNNNNNNNNNNNNNNNNNNKNN).

The protein belongs to the methyltransferase superfamily. METTL16/RlmF family.

It catalyses the reaction adenosine in U6 snRNA + S-adenosyl-L-methionine = N(6)-methyladenosine in U6 snRNA + S-adenosyl-L-homocysteine + H(+). Functionally, RNA N6-methyltransferase that mediates N6-methylation of adenine of U6 small nuclear RNA (U6 snRNA). This is U6 small nuclear RNA (adenine-(43)-N(6))-methyltransferase from Dictyostelium discoideum (Social amoeba).